Reading from the N-terminus, the 915-residue chain is Hexokinase HKDC1 (915 aa).

A mitochondrial-binding peptide (MBP) region spans residues 1–20 (MFAVHLVAFYFTKLKEDQIK). 2 Hexokinase domains span residues 16 to 458 (EDQI…MVTA) and 464 to 903 (QAQR…LITA). Residues Arg-30 and 84 to 89 (DLGGSK) each bind ATP. Residues 73–207 (DGSENGEFLS…DLDVDILALV (135 aa)) are hexokinase small subdomain 1. 84 to 91 (DLGGSKFR) provides a ligand contact to D-glucose 6-phosphate. Residues Ser-155, 172–173 (TK), and 208–209 (ND) contribute to the D-glucose site. A hexokinase large subdomain 1 region spans residues 208 to 447 (NDTVGTMMTC…CDVRFLLSES (240 aa)). D-glucose 6-phosphate contacts are provided by Asp-209 and Thr-232. D-glucose contacts are provided by residues Asn-235, Glu-260, and 291–294 (QLFE). Residue 413–415 (DGT) participates in D-glucose 6-phosphate binding. 425–426 (KR) contacts ATP. D-glucose 6-phosphate contacts are provided by residues Ser-449 and 532 to 536 (DLGGT). The hexokinase small subdomain 2 stretch occupies residues 521–652 (DGTEKGKFLA…EFDLDIVAIV (132 aa)). ATP is bound at residue 532-537 (DLGGTN). D-glucose contacts are provided by residues 600–601 (SF), 617–618 (TK), and 653–654 (ND). A hexokinase large subdomain 2 region spans residues 653-892 (NDTVGTMMTC…CDVTFMLSED (240 aa)). The D-glucose 6-phosphate site is built by Asp-654 and Thr-677. Thr-677 contributes to the ATP binding site. D-glucose-binding positions include 679 to 680 (SN), Glu-705, and Glu-739. Residues 744–745 (GM), 781–785 (TKFLS), and 860–864 (TLYKL) each bind ATP. D-glucose 6-phosphate is bound by residues 858 to 860 (DGT) and Ser-894.

Belongs to the hexokinase family. As to expression, widely expressed. Detected in retina, brain, cerebellum, liver, lung, kidney, spleen, pancreas and intestine.

Its subcellular location is the cytoplasm. It is found in the mitochondrion membrane. It localises to the photoreceptor inner segment. The catalysed reaction is a D-hexose + ATP = a D-hexose 6-phosphate + ADP + H(+). It carries out the reaction D-glucose + ATP = D-glucose 6-phosphate + ADP + H(+). Its pathway is carbohydrate metabolism; hexose metabolism. It participates in carbohydrate degradation; glycolysis; D-glyceraldehyde 3-phosphate and glycerone phosphate from D-glucose: step 1/4. Catalyzes the phosphorylation of hexose to hexose 6-phosphate, although at very low level compared to other hexokinases. Has low glucose phosphorylating activity compared to other hexokinases. Involved in glucose homeostasis and hepatic lipid accumulation. Required to maintain whole-body glucose homeostasis during pregnancy; however additional evidences are required to confirm this role. The protein is Hexokinase HKDC1 of Mus musculus (Mouse).